We begin with the raw amino-acid sequence, 343 residues long: F17c-G fimbrial adhesin (343 aa).

An N-terminal signal peptide occupies residues 1–22; the sequence is MTNFYKVFLAVFILVCCNISHA. The tract at residues 23–199 is receptor-binding lectin domain; sequence AVSFIGSTEN…LNPFTLNDTV (177 aa). Residues 65-66, 110-111, and 138-141 contribute to the a carbohydrate site; these read AN, DT, and STQG. A disulfide bridge connects residues cysteine 75 and cysteine 132. A fimbrillin-binding domain region spans residues 200 to 343; it reads TSCRLLTPSA…GISTFTFSYQ (144 aa). The disordered stretch occupies residues 287–307; it reads LKFGPDSPVKGNENQWQLSTG. Polar residues predominate over residues 298 to 307; that stretch reads NENQWQLSTG.

This sequence belongs to the fimbrial protein family.

The protein resides in the fimbrium. In terms of biological role, essential fimbrial adhesion factor that mediates binding to N-acetylglucosamine-containing receptors in the host intestinal microvilli, leading to colonization of the intestinal tissue, and diarrhea or septicemia. Also confers adhesiveness to laminin and basement membranes. This Escherichia coli protein is F17c-G fimbrial adhesin (f17cG).